An 86-amino-acid polypeptide reads, in one-letter code: Large ribosomal subunit protein eL43 (86 aa).

4 residues coordinate Zn(2+): cysteine 40, cysteine 43, cysteine 58, and cysteine 61. A C4-type zinc finger spans residues 40–61; sequence CPFCRSKAVIREAYGIYRCKKC.

It belongs to the eukaryotic ribosomal protein eL43 family. Putative zinc-binding subfamily. Part of the 50S ribosomal subunit. It depends on Zn(2+) as a cofactor.

Binds to the 23S rRNA. The protein is Large ribosomal subunit protein eL43 of Nanoarchaeum equitans (strain Kin4-M).